A 570-amino-acid polypeptide reads, in one-letter code: Small ribosomal subunit protein bS1 (570 aa).

S1 motif domains lie at 52 to 116 (GAIL…LSRE), 134 to 199 (GSIV…VSRR), 220 to 288 (GERR…LGLK), 305 to 375 (GKRV…LGLK), 392 to 462 (GLRV…LGVK), and 479 to 548 (GSDI…LSIK).

Belongs to the bacterial ribosomal protein bS1 family.

Binds mRNA; thus facilitating recognition of the initiation point. It is needed to translate mRNA with a short Shine-Dalgarno (SD) purine-rich sequence. The chain is Small ribosomal subunit protein bS1 (rpsA) from Chlamydia muridarum (strain MoPn / Nigg).